Reading from the N-terminus, the 147-residue chain is Small ribosomal subunit protein uS9 (147 aa).

This sequence belongs to the universal ribosomal protein uS9 family.

The polypeptide is Small ribosomal subunit protein uS9 (rps16) (Dictyostelium discoideum (Social amoeba)).